Here is a 438-residue protein sequence, read N- to C-terminus: Protein maelstrom 1 (438 aa).

The HMG box DNA-binding region spans 2-69 (APKKRNGFMT…LERTAKKERL (68 aa)). The segment at 374–438 (KEMGSRDLSP…NMGAGKKIAR (65 aa)) is disordered. Positions 381–391 (LSPSSSHQSVS) are enriched in polar residues.

This sequence belongs to the maelstrom family.

It is found in the cytoplasm. The protein localises to the nucleus. Involved both in the piRNA and miRNA metabolic processes. As a component of the meiotic nuage, plays a central role during oogenesis by repressing transposable elements and preventing their mobilization, which is essential for the germline integrity. Repression of transposable elements is mediated via the piRNA metabolic process, which mediates the repression of transposable elements during meiosis by forming complexes composed of piRNAs and Piwi proteins and governs the repression of transposons. As a nuclear component, it is required for proper differentiation in the germline stem cell (GSC) lineage by repressing microRNA-7 (miR-7), thereby acting as an indirect regulator of bag-of-marbles (Bam). Acts by binding to the promoter of miR-7 gene and repressing its expression; miR-7 repression alleviates the Bam repression by miR-7, thereby allowing differentiation in the germline stem cell (GSC) lineage. The chain is Protein maelstrom 1 (mael1) from Drosophila persimilis (Fruit fly).